Consider the following 141-residue polypeptide: MNPTSIVLIVIATVAVCLIIMQIYYIYENYDNIKEFNSTHSTLEYSKTINVFSLDRRIYDPNDHIYDVKQKWRCVNYKNNYVSVSVFGFKSNKDKNIKMFTTINDCINYTFSKSTHSDIYNPCILDDGFQNQDCIFLKSVI.

The chain crosses the membrane as a helical; Signal-anchor for type II membrane protein span at residues Met1 to Met21. Residues Gln22 to Ile141 are Virion surface-facing.

The protein belongs to the poxviridae A28 protein family. In terms of processing, contains two intramolecular disulfide bonds. They are created by the viral disulfide bond formation pathway, a poxvirus-specific pathway that operates on the cytoplasmic side of the MV membranes.

The protein resides in the virion membrane. Functionally, envelope protein required for virus entry into host cell and for cell-cell fusion (syncytium formation). This Erythrocebus patas (Red guenon) protein is Envelope protein A28 homolog.